An 81-amino-acid polypeptide reads, in one-letter code: Small hydrophobic protein (81 aa).

Topologically, residues Met-1–Thr-19 are intravirion. A helical; Signal-anchor for type II membrane protein membrane pass occupies residues Leu-20–Ile-40. Over Leu-41–Asn-81 the chain is Virion surface. Asn-77 is a glycosylation site (N-linked (GlcNAc...) asparagine; by host).

It belongs to the orthopneumovirus small hydrophobic protein family. As to quaternary structure, homopentamer forming a funnel-like pore. Interacts with glycoprotein G; this interaction occurs on the surface of virion particles and infected cells. Interacts with host BCAP31 (via C-terminus); this interaction is direct. Post-translationally, four species of SH have been detected in infected cell cytoplasm: a 7.5 kDa non-glycosylated form (SH0), a 13-15 kDa form that contains one or two N-linked carbohydrate side chains of the high-mannose type (SHg), a 21-30 kDa polylactosaminoglycan-modified form of the protein (SHp), and the isoform generated by alternative translational initiation. Of these different forms, SH0 is by far the most abundant protein detected during virus infection. In terms of processing, tyrosine phosphorylated.

It localises to the virion membrane. Its subcellular location is the host cell membrane. The protein localises to the host Golgi apparatus membrane. The protein resides in the host endoplasmic reticulum membrane. Channel activity is inhibited by copper. Also inhibited by small-molecule pyronin B. In terms of biological role, viroporin that forms a homopentameric ion channel displaying low ion selectivity. May play a role in virus morphogenesis and pathogenicity at various stages of the viral life cycle. Accumulates at the membrane of the Golgi apparatus in infected cells and may facilitate virus release by modifying the secretory pathway. May enhance host membrane permeability and disrupt cellular ion homeostasis, which can be sensed as damage-associated molecular patterns/danger signals, triggering NLRP3 inflammasome activation and inflammatory immune response. Also inhibits host TNFA-mediated signaling pathway and may delay apoptosis, allowing time for the virus to replicate. The polypeptide is Small hydrophobic protein (SH) (Bos taurus (Bovine)).